The following is a 426-amino-acid chain: Enolase (426 aa).

Glutamine 163 lines the (2R)-2-phosphoglycerate pocket. The active-site Proton donor is the glutamate 205. The Mg(2+) site is built by aspartate 242, glutamate 286, and aspartate 313. Residues lysine 338, arginine 367, serine 368, and lysine 389 each contribute to the (2R)-2-phosphoglycerate site. The active-site Proton acceptor is the lysine 338.

Belongs to the enolase family. The cofactor is Mg(2+).

Its subcellular location is the cytoplasm. It localises to the secreted. It is found in the cell surface. The catalysed reaction is (2R)-2-phosphoglycerate = phosphoenolpyruvate + H2O. It functions in the pathway carbohydrate degradation; glycolysis; pyruvate from D-glyceraldehyde 3-phosphate: step 4/5. Functionally, catalyzes the reversible conversion of 2-phosphoglycerate (2-PG) into phosphoenolpyruvate (PEP). It is essential for the degradation of carbohydrates via glycolysis. This Helicobacter pylori (strain J99 / ATCC 700824) (Campylobacter pylori J99) protein is Enolase.